A 324-amino-acid polypeptide reads, in one-letter code: Beta-ketoacyl-[acyl-carrier-protein] synthase III (324 aa).

Residues Cys113 and His251 contribute to the active site. The interval 252–256 is ACP-binding; it reads QANKR. Asn281 is a catalytic residue.

The protein belongs to the thiolase-like superfamily. FabH family. In terms of assembly, homodimer.

It localises to the cytoplasm. It catalyses the reaction malonyl-[ACP] + acetyl-CoA + H(+) = 3-oxobutanoyl-[ACP] + CO2 + CoA. It participates in lipid metabolism; fatty acid biosynthesis. Functionally, catalyzes the condensation reaction of fatty acid synthesis by the addition to an acyl acceptor of two carbons from malonyl-ACP. Catalyzes the first condensation reaction which initiates fatty acid synthesis and may therefore play a role in governing the total rate of fatty acid production. Possesses both acetoacetyl-ACP synthase and acetyl transacylase activities. Its substrate specificity determines the biosynthesis of branched-chain and/or straight-chain of fatty acids. The protein is Beta-ketoacyl-[acyl-carrier-protein] synthase III of Bartonella tribocorum (strain CIP 105476 / IBS 506).